A 412-amino-acid chain; its full sequence is Serine hydroxymethyltransferase (412 aa).

(6S)-5,6,7,8-tetrahydrofolate is bound by residues Leu117 and 121-123 (GHL). An N6-(pyridoxal phosphate)lysine modification is found at Lys226. 349-351 (SPF) serves as a coordination point for (6S)-5,6,7,8-tetrahydrofolate.

This sequence belongs to the SHMT family. In terms of assembly, homodimer. Pyridoxal 5'-phosphate serves as cofactor.

It is found in the cytoplasm. It catalyses the reaction (6R)-5,10-methylene-5,6,7,8-tetrahydrofolate + glycine + H2O = (6S)-5,6,7,8-tetrahydrofolate + L-serine. The protein operates within one-carbon metabolism; tetrahydrofolate interconversion. It functions in the pathway amino-acid biosynthesis; glycine biosynthesis; glycine from L-serine: step 1/1. Its function is as follows. Catalyzes the reversible interconversion of serine and glycine with tetrahydrofolate (THF) serving as the one-carbon carrier. This reaction serves as the major source of one-carbon groups required for the biosynthesis of purines, thymidylate, methionine, and other important biomolecules. Also exhibits THF-independent aldolase activity toward beta-hydroxyamino acids, producing glycine and aldehydes, via a retro-aldol mechanism. In Halothermothrix orenii (strain H 168 / OCM 544 / DSM 9562), this protein is Serine hydroxymethyltransferase.